The following is a 505-amino-acid chain: Lysine--tRNA ligase (505 aa).

E415 and E422 together coordinate Mg(2+).

The protein belongs to the class-II aminoacyl-tRNA synthetase family. In terms of assembly, homodimer. It depends on Mg(2+) as a cofactor.

The protein resides in the cytoplasm. It catalyses the reaction tRNA(Lys) + L-lysine + ATP = L-lysyl-tRNA(Lys) + AMP + diphosphate. This chain is Lysine--tRNA ligase, found in Enterobacter sp. (strain 638).